We begin with the raw amino-acid sequence, 56 residues long: MTEVRVGKDESLDSALKRFKKKLQEDGVLADIRRHEYYEKPSEKRNRKKAQSKKKK.

Belongs to the bacterial ribosomal protein bS21 family.

The polypeptide is Small ribosomal subunit protein bS21 (Dictyoglomus thermophilum (strain ATCC 35947 / DSM 3960 / H-6-12)).